A 338-amino-acid polypeptide reads, in one-letter code: Diacylglycerol acyltransferase/mycolyltransferase Ag85A (338 aa).

The signal sequence occupies residues 1–42; it reads MQLVDRVRGAVTGMSRRLVVGAVGAALVSGLVGAVGGTATAG. 85-86 contributes to the substrate binding site; sequence LR. The fibronectin-binding stretch occupies residues 101–111; sequence FEWYDQSGLSV. An intrachain disulfide couples C130 to C135. Residues S169 and D197 each coordinate substrate. Residue S169 is the Nucleophile of the active site. E273 is an active-site residue. Substrate is bound by residues 275-278, K282, and 305-307; these read FVRT and HSW. H305 is a catalytic residue.

The protein belongs to the mycobacterial A85 antigen family. Homodimer.

Its subcellular location is the secreted. It localises to the cell wall. The protein localises to the cytoplasm. It catalyses the reaction an acyl-CoA + a 1,2-diacyl-sn-glycerol = a triacyl-sn-glycerol + CoA. The enzyme catalyses 2 alpha,alpha'-trehalose 6-mycolate = alpha,alpha'-trehalose 6,6'-bismycolate + alpha,alpha-trehalose. In terms of biological role, the antigen 85 proteins (FbpA, FbpB, FbpC) are responsible for the high affinity of mycobacteria for fibronectin, a large adhesive glycoprotein, which facilitates the attachment of M.tuberculosis to murine alveolar macrophages (AMs). They also help to maintain the integrity of the cell wall by catalyzing the transfer of mycolic acids to cell wall arabinogalactan, and through the synthesis of alpha,alpha-trehalose dimycolate (TDM, cord factor). They catalyze the transfer of a mycoloyl residue from one molecule of alpha,alpha-trehalose monomycolate (TMM) to another TMM, leading to the formation of TDM. FbpA mediates triacylglycerol (TAG) formation with long-chain acyl-CoA as the acyl donor and 1,2-dipalmitoyl-sn-glycerol (1,2-dipalmitin) as the acyl acceptor. It has a preference for C26:0-CoA over C18:1-CoA. The sequence is that of Diacylglycerol acyltransferase/mycolyltransferase Ag85A (fbpA) from Mycobacterium bovis (strain ATCC BAA-935 / AF2122/97).